An 879-amino-acid polypeptide reads, in one-letter code: Leucine--tRNA ligase (879 aa).

The 'HIGH' region motif lies at 46 to 56; that stretch reads PYPSGALHMGH. Positions 638–642 match the 'KMSKS' region motif; that stretch reads KMSKS. Lysine 641 contacts ATP.

This sequence belongs to the class-I aminoacyl-tRNA synthetase family.

Its subcellular location is the cytoplasm. It catalyses the reaction tRNA(Leu) + L-leucine + ATP = L-leucyl-tRNA(Leu) + AMP + diphosphate. The chain is Leucine--tRNA ligase from Xanthomonas campestris pv. campestris (strain 8004).